A 674-amino-acid polypeptide reads, in one-letter code: MFRKRNLVLESFRRFDSGNVETLISWVLCSRTSKPSLFCTSVKPARLNWEVSSQVILKKKLETALKDHRVDDAWDVFKDFKRLYGFPESVIMNRFVTVLSYSSDAGWLCKASDLTRLALKQNPGMLSGDVLTKLSLSLARAQMVESACSILRIMLEKGYVLTSDVLRLVVMHMVKTEIGTCLASNYLVQVCDRFVEFNVGKRNSSPGNVVKPDTVLFNLVLGSCVRFGFSLKGQELIELMAKVDVVADAYSIVIMSCIYEMNGMRDELRKFKEHIGQVPPQLLGHYQHFFDNLLSLEFKFDDIGSAGRLALDMCKSKVLVSVENLGFDSEKPRVLPVGSHHIRSGLKIHISPKLLQRDSSLGVDTEATFVNYSNSKLGITNKTLAKLVYGYKRHDNLPELSKLLFSLGGSRLCADVIDACVAIGWLEAAHDILDDMNSAGYPMELATYRMVLSGYYKSKMLRNAEVLLKQMTKAGLITDPSNEIVVSPETEEKDSENTELRDLLVQEINAGKQMKAPSMLYELNSSLYYFCKAKMQGDALITYRKIPKMKIPPTVQSFWILIDMYSSLGMYREITIVWGDIKRNIASKNLKTTQDLLEKLVVNFLRGGYFERVMELISYMKENDMYNDLTMYKNEYLKLHKNLYRTLKASDAVTEAQAQRLEHVKTFRKLVGIV.

PPR repeat units follow at residues 409 to 443 (GSRLCADVIDACVAIGWLEAAHDILDDMNSAGYPM), 444 to 478 (ELATYRMVLSGYYKSKMLRNAEVLLKQMTKAGLIT), 519 to 553 (MLYELNSSLYYFCKAKMQGDALITYRKIPKMKIPP), 554 to 584 (TVQSFWILIDMYSSLGMYREITIVWGDIKRN), and 593 to 627 (TQDLLEKLVVNFLRGGYFERVMELISYMKENDMYN).

This sequence belongs to the PPR family. P subfamily.

The polypeptide is Pentatricopeptide repeat-containing protein At4g17616 (Arabidopsis thaliana (Mouse-ear cress)).